Reading from the N-terminus, the 423-residue chain is Maltoporin 1 (423 aa).

The N-terminal stretch at 1–24 (MITLRKLPIALAVAAGVLSTQAMA) is a signal peptide.

Belongs to the porin LamB (TC 1.B.3) family. Homotrimer formed of three 18-stranded antiparallel beta-barrels, containing three independent channels.

The protein resides in the cell outer membrane. The enzyme catalyses beta-maltose(in) = beta-maltose(out). In terms of biological role, involved in the transport of maltose and maltodextrins. This chain is Maltoporin 1, found in Yersinia pestis bv. Antiqua (strain Antiqua).